The primary structure comprises 83 residues: Small ribosomal subunit protein eS21 (83 aa).

This sequence belongs to the eukaryotic ribosomal protein eS21 family. Component of the 40S small ribosomal subunit.

The protein resides in the cytoplasm. It localises to the cytosol. The protein localises to the rough endoplasmic reticulum. Functionally, component of the small ribosomal subunit. The ribosome is a large ribonucleoprotein complex responsible for the synthesis of proteins in the cell. The protein is Small ribosomal subunit protein eS21 (rps21) of Xenopus tropicalis (Western clawed frog).